Reading from the N-terminus, the 303-residue chain is tRNA pseudouridine synthase-like 1 (303 aa).

The Nucleophile role is filled by aspartate 66. Serine 84 is modified (phosphoserine). Tyrosine 130 provides a ligand contact to substrate.

It belongs to the tRNA pseudouridine synthase TruA family.

It carries out the reaction a uridine in tRNA = a pseudouridine in tRNA. In Homo sapiens (Human), this protein is tRNA pseudouridine synthase-like 1 (PUSL1).